The sequence spans 37 residues: Large ribosomal subunit protein bL36 (37 aa).

The protein belongs to the bacterial ribosomal protein bL36 family.

The sequence is that of Large ribosomal subunit protein bL36 from Bacillus pumilus (strain SAFR-032).